Reading from the N-terminus, the 561-residue chain is Amidophosphoribosyltransferase 2, chloroplastic (561 aa).

Positions 1–27 are enriched in low complexity; the sequence is MAATSSISSSLSLNAKPNKLSNNNNNN. The tract at residues 1-36 is disordered; it reads MAATSSISSSLSLNAKPNKLSNNNNNNKPHRFLRNP. A chloroplast-targeting transit peptide spans 1–53; the sequence is MAATSSISSSLSLNAKPNKLSNNNNNNKPHRFLRNPFLNPSSSSFSPLPASIS. Residue C87 is the Nucleophile of the active site. A Glutamine amidotransferase type-2 domain is found at 87–307; it reads CGVVGIYGDS…PGEVLVVDKD (221 aa). [4Fe-4S] cluster-binding residues include C323, C469, C520, and C523.

This sequence in the C-terminal section; belongs to the purine/pyrimidine phosphoribosyltransferase family. [4Fe-4S] cluster is required as a cofactor. Mg(2+) serves as cofactor. In terms of tissue distribution, mostly expressed in leaves, and, to a lower extent, in cotyledons.

The protein resides in the plastid. Its subcellular location is the chloroplast stroma. It carries out the reaction 5-phospho-beta-D-ribosylamine + L-glutamate + diphosphate = 5-phospho-alpha-D-ribose 1-diphosphate + L-glutamine + H2O. It functions in the pathway purine metabolism; IMP biosynthesis via de novo pathway; N(1)-(5-phospho-D-ribosyl)glycinamide from 5-phospho-alpha-D-ribose 1-diphosphate: step 1/2. Inhibited by the phenyltriazole acetic acid compound [5-(4-chlorophenyl)-1-isopropyl-1H-[1,2,4]triazol-3-yl]-acetic acid (DAS734), a bleaching herbicide. Catalyzes the first committed step of 'de novo purine biosynthesis from glutamine. Required for chloroplast biogenesis and cell division. Confers sensitivity to the phenyltriazole acetic acid compound [5-(4-chlorophenyl)-1-isopropyl-1H-[1,2,4]triazol-3-yl]-acetic acid (DAS734), a bleaching herbicide. The sequence is that of Amidophosphoribosyltransferase 2, chloroplastic (ASE2) from Arabidopsis thaliana (Mouse-ear cress).